The primary structure comprises 497 residues: Cytosol aminopeptidase (497 aa).

Mn(2+) contacts are provided by lysine 267 and aspartate 272. The active site involves lysine 279. Mn(2+)-binding residues include aspartate 290, aspartate 349, and glutamate 351. Arginine 353 is an active-site residue.

This sequence belongs to the peptidase M17 family. The cofactor is Mn(2+).

The protein localises to the cytoplasm. The enzyme catalyses Release of an N-terminal amino acid, Xaa-|-Yaa-, in which Xaa is preferably Leu, but may be other amino acids including Pro although not Arg or Lys, and Yaa may be Pro. Amino acid amides and methyl esters are also readily hydrolyzed, but rates on arylamides are exceedingly low.. It carries out the reaction Release of an N-terminal amino acid, preferentially leucine, but not glutamic or aspartic acids.. Its function is as follows. Presumably involved in the processing and regular turnover of intracellular proteins. Catalyzes the removal of unsubstituted N-terminal amino acids from various peptides. The chain is Cytosol aminopeptidase (pepA) from Pseudomonas putida (Arthrobacter siderocapsulatus).